Reading from the N-terminus, the 273-residue chain is Zinc finger protein AZF2 (273 aa).

The segment at 33–64 (LKRKRSKRQRSHSPSSSSSSPPRSRPKSQNQD) is disordered. Over residues 34-43 (KRKRSKRQRS) the composition is skewed to basic residues. Residues 44–54 (HSPSSSSSSPP) are compositionally biased toward low complexity. C2H2-type zinc fingers lie at residues 106-128 (YKCN…KASH) and 165-187 (HECS…KRCH). Positions 195-215 (GGGGGSKSISHSGSVSSTVSE) are disordered. Over residues 201 to 213 (KSISHSGSVSSTV) the composition is skewed to low complexity.

In terms of tissue distribution, expressed in roots, radicles, cotyledons, hypocotyls, leaf veins, stems, sepals, petals, stamens, placenta, funiculi and maturated seeds.

The protein resides in the nucleus. Transcriptional repressor involved in the inhibition of plant growth under abiotic stress conditions. Can repress the expression of various genes, including osmotic stress and abscisic acid-repressive genes and auxin-inducible genes, by binding to their promoter regions in a DNA sequence-specific manner. Acts as a negative regulator of abscisic acid (ABA) signaling during seed germination. Probably involved in jasmonate (JA) early signaling response. May regulate the expression of the JA biosynthesis gene LOX3 and control the expression of TIFY10A/JAZ1, a key repressor in the JA signaling cascade. May act as a positive regulator of leaf senescence. Has been identified as a suppressor of the deficiency of yeast snf4 mutant to grow on non-fermentable carbon source. The polypeptide is Zinc finger protein AZF2 (AZF2) (Arabidopsis thaliana (Mouse-ear cress)).